Consider the following 338-residue polypeptide: Ketol-acid reductoisomerase (NADP(+)) (338 aa).

The 181-residue stretch at 1-181 (MKVFYDKDCD…GGGRAGIIET (181 aa)) folds into the KARI N-terminal Rossmann domain. Residues 24–27 (YGSQ), Arg-47, and Ser-52 each bind NADP(+). The active site involves His-107. Gly-133 is a binding site for NADP(+). The KARI C-terminal knotted domain occupies 182–327 (NFREETETDL…AKLRAMMPWI (146 aa)). Mg(2+)-binding residues include Asp-190, Glu-194, Glu-226, and Glu-230. Residue Ser-251 participates in substrate binding.

This sequence belongs to the ketol-acid reductoisomerase family. Requires Mg(2+) as cofactor.

The catalysed reaction is (2R)-2,3-dihydroxy-3-methylbutanoate + NADP(+) = (2S)-2-acetolactate + NADPH + H(+). The enzyme catalyses (2R,3R)-2,3-dihydroxy-3-methylpentanoate + NADP(+) = (S)-2-ethyl-2-hydroxy-3-oxobutanoate + NADPH + H(+). It functions in the pathway amino-acid biosynthesis; L-isoleucine biosynthesis; L-isoleucine from 2-oxobutanoate: step 2/4. The protein operates within amino-acid biosynthesis; L-valine biosynthesis; L-valine from pyruvate: step 2/4. Its function is as follows. Involved in the biosynthesis of branched-chain amino acids (BCAA). Catalyzes an alkyl-migration followed by a ketol-acid reduction of (S)-2-acetolactate (S2AL) to yield (R)-2,3-dihydroxy-isovalerate. In the isomerase reaction, S2AL is rearranged via a Mg-dependent methyl migration to produce 3-hydroxy-3-methyl-2-ketobutyrate (HMKB). In the reductase reaction, this 2-ketoacid undergoes a metal-dependent reduction by NADPH to yield (R)-2,3-dihydroxy-isovalerate. The polypeptide is Ketol-acid reductoisomerase (NADP(+)) (Janthinobacterium sp. (strain Marseille) (Minibacterium massiliensis)).